A 609-amino-acid polypeptide reads, in one-letter code: Replication protein A 70 kDa DNA-binding subunit (609 aa).

Positions 113–163 (GNPQPYNDGQPQPAAPAPASAPAPAPSKLQNNSAPPPSMNRGTSKLFGGGS) are disordered. Over residues 125 to 137 (PAAPAPASAPAPA) the composition is skewed to pro residues. The segment at residues 188-272 (WTVRARVTNK…VKNDYEMTFN (85 aa)) is a DNA-binding region (OB). The segment at 472-494 (CPSQDCNKKVIDQQNGLFRCEKC) adopts a C4-type zinc-finger fold.

The protein belongs to the replication factor A protein 1 family. Component of the heterotrimeric canonical replication protein A complex (RPA). Interacts with rpain-a.

It is found in the nucleus. Its subcellular location is the PML body. Functionally, as part of the heterotrimeric replication protein A complex (RPA/RP-A), binds and stabilizes single-stranded DNA intermediates, that form during DNA replication or upon DNA stress. It prevents their reannealing and in parallel, recruits and activates different proteins and complexes involved in DNA metabolism. Thereby, it plays an essential role both in DNA replication and the cellular response to DNA damage. This is Replication protein A 70 kDa DNA-binding subunit (rpa1) from Xenopus laevis (African clawed frog).